The sequence spans 218 residues: MNKISPEAEKVRNALLSKGIETPMITPEQDRDTRRAGIEQHMREVMKLIGLDLRDDSLEETPVRLAKMFVDEIFSGLDYANFPKITNIENRMKVSEMVLVNDVTLTSTCEHHFVTIDGMVSVAYYPKKWVIGLSKINRIVAFFAQRPQVQERLTEQILLAFQTILETDDVAVYVKATHFCVKCRGIKDTNSYTVTSAFGGVFLDDRETRKEFLTLINK.

3 residues coordinate Zn(2+): cysteine 109, histidine 112, and cysteine 180.

Belongs to the GTP cyclohydrolase I family. As to quaternary structure, toroid-shaped homodecamer, composed of two pentamers of five dimers.

It catalyses the reaction GTP + H2O = 7,8-dihydroneopterin 3'-triphosphate + formate + H(+). It functions in the pathway cofactor biosynthesis; 7,8-dihydroneopterin triphosphate biosynthesis; 7,8-dihydroneopterin triphosphate from GTP: step 1/1. The chain is GTP cyclohydrolase 1 (folE) from Pasteurella multocida (strain Pm70).